The sequence spans 739 residues: Phosphoribosylformylglycinamidine synthase subunit PurL (739 aa).

The active site involves H53. The ATP site is built by Y56 and K95. Position 97 (E97) interacts with Mg(2+). Substrate is bound by residues 98–101 and R120; that span reads SHNH. Residue H99 is the Proton acceptor of the active site. D121 is a binding site for Mg(2+). Residue Q244 participates in substrate binding. D274 contributes to the Mg(2+) binding site. 318–320 is a substrate binding site; sequence ESQ. ATP-binding residues include D501 and G538. Mg(2+) is bound at residue N539. S541 is a substrate binding site.

It belongs to the FGAMS family. In terms of assembly, monomer. Part of the FGAM synthase complex composed of 1 PurL, 1 PurQ and 2 PurS subunits.

It is found in the cytoplasm. It carries out the reaction N(2)-formyl-N(1)-(5-phospho-beta-D-ribosyl)glycinamide + L-glutamine + ATP + H2O = 2-formamido-N(1)-(5-O-phospho-beta-D-ribosyl)acetamidine + L-glutamate + ADP + phosphate + H(+). It functions in the pathway purine metabolism; IMP biosynthesis via de novo pathway; 5-amino-1-(5-phospho-D-ribosyl)imidazole from N(2)-formyl-N(1)-(5-phospho-D-ribosyl)glycinamide: step 1/2. In terms of biological role, part of the phosphoribosylformylglycinamidine synthase complex involved in the purines biosynthetic pathway. Catalyzes the ATP-dependent conversion of formylglycinamide ribonucleotide (FGAR) and glutamine to yield formylglycinamidine ribonucleotide (FGAM) and glutamate. The FGAM synthase complex is composed of three subunits. PurQ produces an ammonia molecule by converting glutamine to glutamate. PurL transfers the ammonia molecule to FGAR to form FGAM in an ATP-dependent manner. PurS interacts with PurQ and PurL and is thought to assist in the transfer of the ammonia molecule from PurQ to PurL. This is Phosphoribosylformylglycinamidine synthase subunit PurL from Listeria welshimeri serovar 6b (strain ATCC 35897 / DSM 20650 / CCUG 15529 / CIP 8149 / NCTC 11857 / SLCC 5334 / V8).